Consider the following 115-residue polypeptide: Probable 4-amino-4-deoxy-L-arabinose-phosphoundecaprenol flippase subunit ArnE (115 aa).

A run of 3 helical transmembrane segments spans residues 42–62 (PWPW…LLLL), 65–85 (VEVG…TLAA), and 93–112 (VDRR…ALLG). Positions 46–113 (LALLALGLGL…IVAGVALLGR (68 aa)) constitute an EamA domain.

This sequence belongs to the ArnE family. Heterodimer of ArnE and ArnF.

The protein resides in the cell inner membrane. The protein operates within bacterial outer membrane biogenesis; lipopolysaccharide biosynthesis. Translocates 4-amino-4-deoxy-L-arabinose-phosphoundecaprenol (alpha-L-Ara4N-phosphoundecaprenol) from the cytoplasmic to the periplasmic side of the inner membrane. The protein is Probable 4-amino-4-deoxy-L-arabinose-phosphoundecaprenol flippase subunit ArnE of Pseudomonas aeruginosa (strain LESB58).